The following is a 137-amino-acid chain: Protein CTLA-2-alpha (137 aa).

The N-terminal stretch at 1–27 (MMVSICEQKLQHFSAVFLLILCLGMMS) is a signal peptide. A run of 2 repeats spans residues 39 to 41 (EWK) and 42 to 44 (EWK). The segment at 39 to 44 (EWKEWK) is 2 X 3 AA tandem repeats of E-W-K. The disordered stretch occupies residues 114–137 (APDLPEYEDLGKNSYLTPGRAQPE).

To the propeptide regions of cysteine proteases.

It localises to the secreted. Not known, expressed in activated T-cell. In Mus musculus (Mouse), this protein is Protein CTLA-2-alpha (Ctla2a).